The primary structure comprises 72 residues: DNA-directed RNA polymerase subunit omega (72 aa).

Belongs to the RNA polymerase subunit omega family. In terms of assembly, the RNAP catalytic core consists of 2 alpha, 1 beta, 1 beta' and 1 omega subunit. When a sigma factor is associated with the core the holoenzyme is formed, which can initiate transcription.

The catalysed reaction is RNA(n) + a ribonucleoside 5'-triphosphate = RNA(n+1) + diphosphate. In terms of biological role, promotes RNA polymerase assembly. Latches the N- and C-terminal regions of the beta' subunit thereby facilitating its interaction with the beta and alpha subunits. The protein is DNA-directed RNA polymerase subunit omega of Francisella philomiragia subsp. philomiragia (strain ATCC 25017 / CCUG 19701 / FSC 153 / O#319-036).